Consider the following 160-residue polypeptide: CXXC motif containing zinc binding protein (160 aa).

Zn(2+) is bound by residues Cys33, Cys36, Cys67, and Cys70. Residue Ser75 is modified to Phosphoserine.

The protein belongs to the UPF0587 family. Monomer.

In Homo sapiens (Human), this protein is CXXC motif containing zinc binding protein.